A 372-amino-acid chain; its full sequence is Glutamate 5-kinase (372 aa).

Lysine 9 contributes to the ATP binding site. Residues serine 49, aspartate 136, and asparagine 148 each contribute to the substrate site. Residues 168-169 (TD) and 210-216 (TGGMKSK) contribute to the ATP site. The PUA domain occupies 276-353 (AGSIEIDSGA…EEALSLTKRS (78 aa)).

This sequence belongs to the glutamate 5-kinase family.

The protein resides in the cytoplasm. It catalyses the reaction L-glutamate + ATP = L-glutamyl 5-phosphate + ADP. It participates in amino-acid biosynthesis; L-proline biosynthesis; L-glutamate 5-semialdehyde from L-glutamate: step 1/2. In terms of biological role, catalyzes the transfer of a phosphate group to glutamate to form L-glutamate 5-phosphate. This chain is Glutamate 5-kinase, found in Shouchella clausii (strain KSM-K16) (Alkalihalobacillus clausii).